Here is an 804-residue protein sequence, read N- to C-terminus: MNYNHNQIEKKWQDYWDENKTFKTNDNLGQKKFYALDMFPYPSGAGLHVGHPEGYTATDIISRYKRMQGYNVLHPMGWDAFGLPAEQYALDTGNDPREFTKKNIQTFKRQIKELGFSYDWDREVNTTDPEYYKWTQWIFIQLYNKGLAYVDEVAVNWCPALGTVLSNEEVIDGVSERGGHPVYRKPMKQWVLKITEYADQLLADLDDLDWPESLKDMQRNWIGRSEGAKVSFDVDNSEGKVEVFTTRPDTIYGASFLVLSPEHALVDSITTDEYKDQVKAYQTEASKKSDLERTDLAKDKSGVFTGAYAINPLSGEKVQIWIADYVLSTYGTGAIMAVPAHDDRDYEFAKKFDLPIIEVIEGGNVEEAAYTGEGKHINSGELDGLENEAAITKAIQLLEKKGAGEKKVNYKLRDWLFSRQRYWGEPIPVIHWEDGTMTTVPEEELPLLLPETDEIKPSGTGESPLANIDSFVNVVDEKTGMKGRRETNTMPQWAGSCWYYLRYIDPKNENMLADPEKLKHWLPVDLYIGGVEHAVLHLLYARFWHKVLYDLGIVPTKEPFQKLFNQGMILGEGNEKMSKSKGNVINPDDIVQSHGADTLRLYEMFMGPLDAAIAWSEKGLDGSRRFLDRVWRLMVNEDGTLSSKIVTTNNKSLDKVYNQTVKKVTEDFETLGFNTAISQLMVFINECYKVDEVYKPYIEGFVKMLAPIAPHIGEELWSKLGHEESITYQPWPTYDEALLVDDEVEIVVQVNGKLRAKIKIAKDTSKEEMQEIALSNDNVKASIEGKDIMKVIAVPQKLVNIVAK.

A 'HIGH' region motif is present at residues proline 40 to histidine 51. The 'KMSKS' region signature appears at lysine 576–serine 580. Lysine 579 serves as a coordination point for ATP.

It belongs to the class-I aminoacyl-tRNA synthetase family.

Its subcellular location is the cytoplasm. The enzyme catalyses tRNA(Leu) + L-leucine + ATP = L-leucyl-tRNA(Leu) + AMP + diphosphate. The polypeptide is Leucine--tRNA ligase (Staphylococcus aureus (strain MRSA252)).